The primary structure comprises 130 residues: Lysozyme C (130 aa).

The C-type lysozyme domain occupies 2–130; the sequence is KVYGRCELAA…VNVWIRGCRL (129 aa). 4 disulfide bridges follow: cysteine 7–cysteine 128, cysteine 31–cysteine 116, cysteine 65–cysteine 81, and cysteine 77–cysteine 95. Catalysis depends on residues glutamate 36 and aspartate 53.

The protein belongs to the glycosyl hydrolase 22 family. As to quaternary structure, monomer.

Its subcellular location is the secreted. The enzyme catalyses Hydrolysis of (1-&gt;4)-beta-linkages between N-acetylmuramic acid and N-acetyl-D-glucosamine residues in a peptidoglycan and between N-acetyl-D-glucosamine residues in chitodextrins.. In terms of biological role, lysozymes have primarily a bacteriolytic function; those in tissues and body fluids are associated with the monocyte-macrophage system and enhance the activity of immunoagents. This Phasianus versicolor (Green pheasant) protein is Lysozyme C (LYZ).